The sequence spans 918 residues: Glutamate receptor 2.5 (918 aa).

An N-terminal signal peptide occupies residues 1–30; it reads MSLFHHLVSRFLSLWLLIFLVFLVLSLGKS. Residues 31 to 586 lie on the Extracellular side of the membrane; it reads QKEALQVKVG…WVFLKPLTKE (556 aa). N-linked (GlcNAc...) asparagine glycosylation is found at Asn-46, Asn-58, Asn-122, Asn-336, Asn-340, and Asn-546. Residues 587–607 form a helical membrane-spanning segment; that stretch reads LWLVTAASFLYIGIMVWIFEY. Topologically, residues 608–616 are cytoplasmic; sequence QADEEFREQ. A helical membrane pass occupies residues 617–637; the sequence is MIIDKISSVFYFSFSTLFFAH. The Cytoplasmic portion of the chain corresponds to 638-647; sequence RRPSESFFTR. Residues 648–668 form a helical membrane-spanning segment; it reads VLVVVWCFVLLILTQSYTATL. The Extracellular segment spans residues 669-828; that stretch reads TSMLTVQELR…DSPIQLDHHS (160 aa). N-linked (GlcNAc...) asparagine glycosylation occurs at Asn-791. Residues 829 to 849 traverse the membrane as a helical segment; that stretch reads FEALFLIVFVVSVILLLLMLA. Topologically, residues 850 to 918 are cytoplasmic; that stretch reads SRGYQERQHN…VAPLSRLKSA (69 aa). The tract at residues 857–881 is disordered; the sequence is QHNASPNLPNDQANAAQEEVNEEGN. Residues 866–881 show a composition bias toward low complexity; sequence NDQANAAQEEVNEEGN.

Belongs to the glutamate-gated ion channel (TC 1.A.10.1) family. May form heteromers. As to expression, expressed predominantly in roots.

Its subcellular location is the membrane. Glutamate-gated receptor that probably acts as a non-selective cation channel. May be involved in light-signal transduction and calcium homeostasis via the regulation of calcium influx into cells. This chain is Glutamate receptor 2.5 (GLR2.5), found in Arabidopsis thaliana (Mouse-ear cress).